The sequence spans 287 residues: Arylamine N-acetyltransferase, liver isozyme (287 aa).

The active-site Acyl-thioester intermediate is C68. Catalysis depends on residues H107 and D122.

It belongs to the arylamine N-acetyltransferase family.

It carries out the reaction an arylamine + acetyl-CoA = an N-acetylarylamine + CoA. This chain is Arylamine N-acetyltransferase, liver isozyme, found in Gallus gallus (Chicken).